The primary structure comprises 450 residues: Putative gustatory receptor 28a (450 aa).

The Cytoplasmic portion of the chain corresponds to 1–47; sequence MAFKLWERFSQADNVFQALRPLTFISLLGLAPFRLNLNPRKEVQTSK. A helical transmembrane segment spans residues 48–68; it reads FSFFAGIVHFLFFVLCFGISV. The Extracellular portion of the chain corresponds to 69–87; that stretch reads KEGDSIIGYFFQTNITRFS. An N-linked (GlcNAc...) asparagine glycan is attached at Asn82. A helical membrane pass occupies residues 88 to 108; sequence DGTLRLTGILAMSTIFGFAMF. Over 109-138 the chain is Cytoplasmic; the sequence is KRQRLVSIIQNNIVVDEIFVRLGMKLDYRR. A helical membrane pass occupies residues 139 to 159; it reads ILLSSFLISLGMLLFNVIYLC. At 160–171 the chain is on the extracellular side; that stretch reads VSYSLLVSATIS. Residues 172–192 traverse the membrane as a helical segment; sequence PSFVTFTTFALPHINISLMVF. The Cytoplasmic segment spans residues 193-292; sequence KFLCTTDLAR…CQTIEEYFTY (100 aa). A helical membrane pass occupies residues 293–313; the sequence is PLLGIIAISFLFILFDDFYIL. Residues 314-329 are Extracellular-facing; the sequence is EAILNPKRLDVFEADE. The chain crosses the membrane as a helical span at residues 330–350; the sequence is FFAFFLMQLIWYIVIIVLIVE. Over 351 to 407 the chain is Cytoplasmic; sequence GSSRTILHSSYTAAIVHKILNITDDPELRDRLFRLSLQLSHRKVLFTAAGLFRLDRT. A helical membrane pass occupies residues 408-424; that stretch reads LIFTITGAATCYLIILI. At 425–450 the chain is on the extracellular side; it reads QFRFTHHMDDTSSNSTNNLHSIHLGD. Asn438 carries an N-linked (GlcNAc...) asparagine glycan.

It belongs to the insect chemoreceptor superfamily. Gustatory receptor (GR) family. Gr2a subfamily. As to expression, in addition to expression in a large number of taste neurons, Gr28a is also expressed in a few nonchemosensory neurons, including the campaniform sensilla of the wing, leg stretch receptors, and multiple dendritic (MD) neurons in the abdomen. In larvea, is expressed in neurons of the terminal external chemosensory organ, the dorsal external chemosensory organ, as well as in the ventral and posterior pharyngeal sense organ.

The protein resides in the cell membrane. Its function is as follows. Probable gustatory receptor which mediates acceptance or avoidance behavior, depending on its substrates. Atypical expression also suggests nongustatory roles in the nervous system and tissues involved in proprioception, hygroreception, and other sensory modalities. It is also possible that it has chemosensory roles in the detection of internal ligands. This Drosophila melanogaster (Fruit fly) protein is Putative gustatory receptor 28a (Gr28a).